The chain runs to 400 residues: Enoyl-[acyl-carrier-protein] reductase [NADH] (400 aa).

NAD(+)-binding positions include 48-53 (GSSSGY), 74-75 (FE), 111-112 (DA), and 139-140 (LA). Substrate is bound at residue Y225. Y235 (proton donor) is an active-site residue. Residues K244 and 273 to 275 (VVT) contribute to the NAD(+) site.

This sequence belongs to the TER reductase family. In terms of assembly, monomer.

The catalysed reaction is a 2,3-saturated acyl-[ACP] + NAD(+) = a (2E)-enoyl-[ACP] + NADH + H(+). It functions in the pathway lipid metabolism; fatty acid biosynthesis. In terms of biological role, involved in the final reduction of the elongation cycle of fatty acid synthesis (FAS II). Catalyzes the reduction of a carbon-carbon double bond in an enoyl moiety that is covalently linked to an acyl carrier protein (ACP). This is Enoyl-[acyl-carrier-protein] reductase [NADH] from Shewanella denitrificans (strain OS217 / ATCC BAA-1090 / DSM 15013).